Here is a 446-residue protein sequence, read N- to C-terminus: Tubulin beta chain (446 aa).

GTP contacts are provided by Gln11, Glu69, Ser138, Gly142, Thr143, Gly144, Asn204, and Asn226. Glu69 serves as a coordination point for Mg(2+). The tract at residues 423-446 is disordered; it reads QQYQDATADEEEGEYEEEPAEEEQ. Residues 429–446 are compositionally biased toward acidic residues; sequence TADEEEGEYEEEPAEEEQ.

It belongs to the tubulin family. As to quaternary structure, dimer of alpha and beta chains. A typical microtubule is a hollow water-filled tube with an outer diameter of 25 nm and an inner diameter of 15 nM. Alpha-beta heterodimers associate head-to-tail to form protofilaments running lengthwise along the microtubule wall with the beta-tubulin subunit facing the microtubule plus end conferring a structural polarity. Microtubules usually have 13 protofilaments but different protofilament numbers can be found in some organisms and specialized cells. Mg(2+) serves as cofactor.

Its subcellular location is the cytoplasm. The protein resides in the cytoskeleton. Tubulin is the major constituent of microtubules, a cylinder consisting of laterally associated linear protofilaments composed of alpha- and beta-tubulin heterodimers. Microtubules grow by the addition of GTP-tubulin dimers to the microtubule end, where a stabilizing cap forms. Below the cap, tubulin dimers are in GDP-bound state, owing to GTPase activity of alpha-tubulin. The sequence is that of Tubulin beta chain from Pleurotus sajor-caju (Oyster mushroom).